A 58-amino-acid polypeptide reads, in one-letter code: Small ribosomal subunit protein bS21 (58 aa).

This sequence belongs to the bacterial ribosomal protein bS21 family.

This is Small ribosomal subunit protein bS21 from Lactobacillus johnsonii (strain CNCM I-12250 / La1 / NCC 533).